A 170-amino-acid polypeptide reads, in one-letter code: ATP synthase subunit b (170 aa).

A helical membrane pass occupies residues 15-37; the sequence is GDILFQLLAMLILLALLKKYALG.

This sequence belongs to the ATPase B chain family. F-type ATPases have 2 components, F(1) - the catalytic core - and F(0) - the membrane proton channel. F(1) has five subunits: alpha(3), beta(3), gamma(1), delta(1), epsilon(1). F(0) has three main subunits: a(1), b(2) and c(10-14). The alpha and beta chains form an alternating ring which encloses part of the gamma chain. F(1) is attached to F(0) by a central stalk formed by the gamma and epsilon chains, while a peripheral stalk is formed by the delta and b chains. The F(1)F(0) complex interacts with SpoIIIJ and YqjG; YqgA is found in the same complex.

It localises to the cell membrane. Functionally, f(1)F(0) ATP synthase produces ATP from ADP in the presence of a proton or sodium gradient. F-type ATPases consist of two structural domains, F(1) containing the extramembraneous catalytic core and F(0) containing the membrane proton channel, linked together by a central stalk and a peripheral stalk. During catalysis, ATP synthesis in the catalytic domain of F(1) is coupled via a rotary mechanism of the central stalk subunits to proton translocation. In terms of biological role, component of the F(0) channel, it forms part of the peripheral stalk, linking F(1) to F(0). The polypeptide is ATP synthase subunit b (Bacillus subtilis (strain 168)).